Consider the following 148-residue polypeptide: Probable DNA-directed RNA polymerases I, II, and III subunit RPABC3 (148 aa).

Residues 16–40 form a non-specific ssDNA binding region; it reads DPDGKKFDRVSRYFCDAESFKMELI.

This sequence belongs to the eukaryotic RPB8 RNA polymerase subunit family. In terms of assembly, component of the RNA polymerase I (Pol I), RNA polymerase II (Pol II) and RNA polymerase III (Pol III) complexes consisting of at least 13, 12 and 17 subunits, respectively. Directly interacts with POLR2A.

Its subcellular location is the nucleus. DNA-dependent RNA polymerase catalyzes the transcription of DNA into RNA using the four ribonucleoside triphosphates as substrates. Common component of RNA polymerases I, II and III which synthesize ribosomal RNA precursors, mRNA precursors and many functional non-coding RNAs, and small RNAs, such as 5S rRNA and tRNAs, respectively. This chain is Probable DNA-directed RNA polymerases I, II, and III subunit RPABC3 (rpb-8), found in Caenorhabditis elegans.